Reading from the N-terminus, the 519-residue chain is Glutamate--cysteine ligase (519 aa).

The protein belongs to the glutamate--cysteine ligase type 1 family. Type 1 subfamily.

The enzyme catalyses L-cysteine + L-glutamate + ATP = gamma-L-glutamyl-L-cysteine + ADP + phosphate + H(+). Its pathway is sulfur metabolism; glutathione biosynthesis; glutathione from L-cysteine and L-glutamate: step 1/2. In Edwardsiella ictaluri (strain 93-146), this protein is Glutamate--cysteine ligase.